The sequence spans 522 residues: Sugar transport protein MST2 (522 aa).

Residues 1-24 (MAAATAADVAEDTASVYSGKLTLY) lie on the Cytoplasmic side of the membrane. A helical membrane pass occupies residues 25-45 (VFLTCGVAATGGLIIGYDIGI). The Extracellular segment spans residues 46-82 (SGGVTSMDTFLGKFFPSVLHQEQTAQGTSQYCKFNSQ). A helical transmembrane segment spans residues 83-103 (PLTAFTSSLYLAALVASFFVA). At 104–111 (SFTRALGR) the chain is on the cytoplasmic side. Residues 112–132 (KWSMFGGGVSFLAGATLNGAA) form a helical membrane-spanning segment. The Extracellular segment spans residues 133–134 (RN). Residues 135–155 (VAMLIVGRILLGIGVAFCGLS) form a helical membrane-spanning segment. Topologically, residues 156-169 (TPIYLSEMAPPRLR) are cytoplasmic. The helical transmembrane segment at 170–190 (GMLNIGLQLMITVGIFSANLV) threads the bilayer. Over 191 to 204 (NYGAAKIRGGWGWR) the chain is Extracellular. The chain crosses the membrane as a helical span at residues 205–225 (VSLGLAAAPACVIAVGSLFLP). Topologically, residues 226–291 (DSPSSLINRG…DVLQRRYRPQ (66 aa)) are cytoplasmic. A helical membrane pass occupies residues 292–312 (LAMAVLIPFFQQLTGINVIMF). Topologically, residues 313 to 329 (YAPVLFKTIGLGGDASL) are extracellular. The helical transmembrane segment at 330–350 (MSAVITGLVNIVATFVSIATV) threads the bilayer. Residues 351–361 (DSLGRRKLLFQ) lie on the Cytoplasmic side of the membrane. Residues 362 to 382 (GGCQMLVSQVIIGTLIGVVFG) traverse the membrane as a helical segment. Over 383-391 (TSGDGNISR) the chain is Extracellular. A helical membrane pass occupies residues 392-412 (ALAVCIVVFICVYVAGFAWSW). At 413-434 (GPLGVLLPSEIFPLEVRPAGQS) the chain is on the cytoplasmic side. Residues 435-455 (ISVAVNMLCTFAVAEAFLPML) form a helical membrane-spanning segment. At 456–459 (CHMR) the chain is on the extracellular side. The chain crosses the membrane as a helical span at residues 460-480 (FGLFYFFSGWVLVMTLFVSAF). Residues 481-522 (LPETKGVPIEKMTVVWRTHWFWGRFYCNQDADAHVQVANSKV) are Cytoplasmic-facing.

The protein belongs to the major facilitator superfamily. Sugar transporter (TC 2.A.1.1) family.

Its subcellular location is the membrane. Its function is as follows. Mediates active uptake of hexoses by sugar:proton symport. Can transport glucose. The sequence is that of Sugar transport protein MST2 from Oryza sativa subsp. japonica (Rice).